The chain runs to 536 residues: B3 domain-containing protein Os03g0619800 (536 aa).

Residues 26-119 constitute a DNA-binding region (TF-B3 1); the sequence is MRCFLRRMAA…RYEVLILDSD (94 aa). The interval 138–199 is disordered; that stretch reads DKTVDPVDSS…VEPQTPSGSD (62 aa). Composition is skewed to low complexity over residues 145–160 and 171–183; these read DSSGSSSNDTTQSSRS and SSSEKSGEDSPSG. A DNA-binding region (TF-B3 2) is located at residues 231–330; the sequence is VAVMKKCNLQ…AFTVHLLQAE (100 aa). Residues 335–396 are disordered; sequence RDGTDVHKIG…SDGPSEPPYI (62 aa). Positions 344-355 are enriched in polar residues; that stretch reads GSSQNKRNSKMA. The span at 372–382 shows a compositional bias: basic and acidic residues; sequence SNKHGVSHESL. The segment at residues 429–529 is a DNA-binding region (TF-B3 3); the sequence is ISKLAGSGGK…TMEVHIISNL (101 aa).

It is found in the nucleus. The sequence is that of B3 domain-containing protein Os03g0619800 from Oryza sativa subsp. japonica (Rice).